The following is a 227-amino-acid chain: MLTTKQKELLLFINDRIKDTGVSPSFDEMKEALDLASKSGIHRLITALEERGFIRRLANRARALEVLKLPDSAIPPPNARQRRDFRPALVTNQGAEAPRIAGMIPLVGRIAAGSPISAIQQENGQVASPGGLPEGDDYFALEVQGDSMIQAGILNGDTVILKRTNTAQTGDIVVALIDGEEATLKRLRRKGASVALEAANPAFETRIFGPDRVEVQGRLVALIRRYE.

A DNA-binding region (H-T-H motif) is located at residues 26-46; sequence FDEMKEALDLASKSGIHRLIT. Catalysis depends on for autocatalytic cleavage activity residues serine 147 and lysine 185.

Belongs to the peptidase S24 family. In terms of assembly, homodimer.

It carries out the reaction Hydrolysis of Ala-|-Gly bond in repressor LexA.. In terms of biological role, represses a number of genes involved in the response to DNA damage (SOS response), including recA and lexA. In the presence of single-stranded DNA, RecA interacts with LexA causing an autocatalytic cleavage which disrupts the DNA-binding part of LexA, leading to derepression of the SOS regulon and eventually DNA repair. The polypeptide is LexA repressor (Hyphomonas neptunium (strain ATCC 15444)).